The chain runs to 486 residues: Protein DETOXIFICATION 53 (486 aa).

Transmembrane regions (helical) follow at residues 15–35 (CPIV…MWFL), 45–65 (GGAL…KGLS), 94–114 (LLIV…PIFL), 130–150 (MLFF…RTFL), 159–179 (LTIS…VFVV), 187–207 (GVAI…LVYT), 240–260 (AISV…CGLL), 267–287 (VAAM…PFAI), 312–332 (VIGL…VTAL), 346–366 (ILGL…GNSP), 386–406 (VNLC…TFGF), and 413–433 (LWFG…YTLI). The disordered stretch occupies residues 448-474 (TSAAADKSHSEDETVHAEVQDDDDVSS). The span at 453-466 (DKSHSEDETVHAEV) shows a compositional bias: basic and acidic residues.

Belongs to the multi antimicrobial extrusion (MATE) (TC 2.A.66.1) family.

It is found in the membrane. The polypeptide is Protein DETOXIFICATION 53 (Arabidopsis thaliana (Mouse-ear cress)).